The following is a 238-amino-acid chain: Aliphatic sulfonates import ATP-binding protein SsuB (238 aa).

The ABC transporter domain maps to 7 to 221 (VSLHQVHQQF…RPGDAAFASL (215 aa)). 39-46 (GRSGSGKT) lines the ATP pocket.

The protein belongs to the ABC transporter superfamily. Aliphatic sulfonates importer (TC 3.A.1.17.2) family. The complex is composed of two ATP-binding proteins (SsuB), two transmembrane proteins (SsuC) and a solute-binding protein (SsuA).

It localises to the cell inner membrane. It carries out the reaction ATP + H2O + aliphatic sulfonate-[sulfonate-binding protein]Side 1 = ADP + phosphate + aliphatic sulfonateSide 2 + [sulfonate-binding protein]Side 1.. Its function is as follows. Part of the ABC transporter complex SsuABC involved in aliphatic sulfonates import. Responsible for energy coupling to the transport system. This chain is Aliphatic sulfonates import ATP-binding protein SsuB, found in Granulibacter bethesdensis (strain ATCC BAA-1260 / CGDNIH1).